The following is a 160-amino-acid chain: Ribosomal RNA large subunit methyltransferase H (160 aa).

Residues Leu76, Gly108, and 127–132 (LGKMTW) each bind S-adenosyl-L-methionine.

Belongs to the RNA methyltransferase RlmH family. In terms of assembly, homodimer.

Its subcellular location is the cytoplasm. It carries out the reaction pseudouridine(1915) in 23S rRNA + S-adenosyl-L-methionine = N(3)-methylpseudouridine(1915) in 23S rRNA + S-adenosyl-L-homocysteine + H(+). Functionally, specifically methylates the pseudouridine at position 1915 (m3Psi1915) in 23S rRNA. The protein is Ribosomal RNA large subunit methyltransferase H of Sinorhizobium medicae (strain WSM419) (Ensifer medicae).